The following is a 727-amino-acid chain: Probable copper-importing P-type ATPase A (727 aa).

Residues Met-1 to Asp-94 lie on the Cytoplasmic side of the membrane. The region spanning Lys-6–Ile-70 is the HMA domain. Cys-17 and Cys-20 together coordinate Cu(+). Residues Leu-95–Gly-115 form a helical membrane-spanning segment. The Extracellular portion of the chain corresponds to Ser-116–Pro-119. A helical membrane pass occupies residues Ile-120–Val-137. At Gln-138–Asp-161 the chain is on the cytoplasmic side. Residues Val-162 to Phe-181 form a helical membrane-spanning segment. At Pro-182–Asp-187 the chain is on the extracellular side. The helical transmembrane segment at Leu-188–Gly-203 threads the bilayer. At Lys-204–Ser-341 the chain is on the cytoplasmic side. A helical membrane pass occupies residues Gly-342 to Leu-362. Residues Thr-363–Ser-375 lie on the Extracellular side of the membrane. The chain crosses the membrane as a helical span at residues Val-376–Gly-396. Topologically, residues Thr-397–Asn-678 are cytoplasmic. Asp-425 serves as the catalytic 4-aspartylphosphate intermediate. Positions 621 and 625 each coordinate Mg(2+). The chain crosses the membrane as a helical span at residues Leu-679–Leu-698. Over Asn-699–Pro-700 the chain is Extracellular. A helical membrane pass occupies residues Ile-701–Leu-721. Residues Asn-722 to Lys-727 are Cytoplasmic-facing.

It belongs to the cation transport ATPase (P-type) (TC 3.A.3) family. Type IB subfamily. As to quaternary structure, monomer. Interacts with the copper chaperone CopZ.

The protein localises to the cell membrane. The catalysed reaction is Cu(+)(in) + ATP + H2O = Cu(+)(out) + ADP + phosphate + H(+). With respect to regulation, inhibited by vanadate. Functionally, probably involved in copper import under copper limiting conditions. This chain is Probable copper-importing P-type ATPase A (copA), found in Enterococcus hirae (strain ATCC 9790 / DSM 20160 / JCM 8729 / LMG 6399 / NBRC 3181 / NCIMB 6459 / NCDO 1258 / NCTC 12367 / WDCM 00089 / R).